A 668-amino-acid chain; its full sequence is DNA ligase (668 aa).

Residues 31–35 (DYDFD), 80–81 (SL), and E111 contribute to the NAD(+) site. Catalysis depends on K113, which acts as the N6-AMP-lysine intermediate. 4 residues coordinate NAD(+): R134, E170, K285, and K309. Zn(2+)-binding residues include C403, C406, C421, and C427. Residues 587–668 (NATEKFIGKT…EFITKLNESE (82 aa)) form the BRCT domain.

Belongs to the NAD-dependent DNA ligase family. LigA subfamily. Mg(2+) serves as cofactor. It depends on Mn(2+) as a cofactor.

The catalysed reaction is NAD(+) + (deoxyribonucleotide)n-3'-hydroxyl + 5'-phospho-(deoxyribonucleotide)m = (deoxyribonucleotide)n+m + AMP + beta-nicotinamide D-nucleotide.. DNA ligase that catalyzes the formation of phosphodiester linkages between 5'-phosphoryl and 3'-hydroxyl groups in double-stranded DNA using NAD as a coenzyme and as the energy source for the reaction. It is essential for DNA replication and repair of damaged DNA. The sequence is that of DNA ligase from Flavobacterium johnsoniae (strain ATCC 17061 / DSM 2064 / JCM 8514 / BCRC 14874 / CCUG 350202 / NBRC 14942 / NCIMB 11054 / UW101) (Cytophaga johnsonae).